The sequence spans 184 residues: MKKQDISVKTVVAIGIGAAVFVILGRFVVIPTGFPNTNIETSYAFLALISAIFGPFAGLMTGLVGHAIKDFTTYGSAWWSWVICSGIIGCLYGWIGLKLNLSSGRFSRKSMIYFNIGQIIANIICWALIAPTLDILIYNEPANKVYTQGVISAVLNIISVGIIGTILLKAYASSQIKKGSLRKE.

The next 5 helical transmembrane spans lie at 11–31 (VVAIGIGAAVFVILGRFVVIP), 44–64 (AFLALISAIFGPFAGLMTGLV), 77–97 (AWWSWVICSGIIGCLYGWIGL), 111–131 (MIYFNIGQIIANIICWALIAP), and 148–168 (QGVISAVLNIISVGIIGTILL).

It belongs to the UPF0397 family.

It localises to the cell membrane. This chain is UPF0397 protein SAS2570, found in Staphylococcus aureus (strain MSSA476).